The sequence spans 297 residues: Large ribosomal subunit protein uL18 (297 aa).

Gly2 is modified (N-acetylglycine). N6-acetyllysine is present on residues Lys5 and Lys48. Ser185 bears the Phosphoserine mark. Lys220 carries the post-translational modification N6-acetyllysine; alternate. A Glycyl lysine isopeptide (Lys-Gly) (interchain with G-Cter in SUMO1); alternate cross-link involves residue Lys220. Lys220 participates in a covalent cross-link: Glycyl lysine isopeptide (Lys-Gly) (interchain with G-Cter in SUMO2); alternate. A Phosphothreonine modification is found at Thr232. Positions 253–297 (YEKKPKKEVKKKRWNRPKMSLAQKKDRVAQKKASFLRAQERAAES) are disordered. Basic residues predominate over residues 258-268 (KKEVKKKRWNR). The residue at position 272 (Ser272) is a Phosphoserine.

It belongs to the universal ribosomal protein uL18 family. In terms of assembly, component of the large ribosomal subunit (LSU). Part of the 5S RNP complex, which is a LSU subcomplex composed of the 5S RNA, RPL5 and RPL11. Component of a hexameric 5S RNP precursor complex, composed of 5S RNA, RRS1, RPF2/BXDC1, RPL5, RPL11 and HEATR3; this complex acts as a precursor for ribosome assembly. Interacts with NVL in an ATP-dependent manner. Interacts with RRP1B. Interacts with IPO5, IPO7 and KPNB1; these interactions may be involved in RPL5 nuclear import for the assembly of ribosomal subunits. Interacts with RRP1B.

The protein resides in the cytoplasm. It is found in the nucleus. The protein localises to the nucleolus. Its function is as follows. Component of the ribosome, a large ribonucleoprotein complex responsible for the synthesis of proteins in the cell. The small ribosomal subunit (SSU) binds messenger RNAs (mRNAs) and translates the encoded message by selecting cognate aminoacyl-transfer RNA (tRNA) molecules. The large subunit (LSU) contains the ribosomal catalytic site termed the peptidyl transferase center (PTC), which catalyzes the formation of peptide bonds, thereby polymerizing the amino acids delivered by tRNAs into a polypeptide chain. The nascent polypeptides leave the ribosome through a tunnel in the LSU and interact with protein factors that function in enzymatic processing, targeting, and the membrane insertion of nascent chains at the exit of the ribosomal tunnel. As part of the 5S RNP/5S ribonucleoprotein particle it is an essential component of the LSU, required for its formation and the maturation of rRNAs. It also couples ribosome biogenesis to p53/TP53 activation. As part of the 5S RNP it accumulates in the nucleoplasm and inhibits MDM2, when ribosome biogenesis is perturbed, mediating the stabilization and the activation of TP53. The sequence is that of Large ribosomal subunit protein uL18 (RPL5) from Macaca fascicularis (Crab-eating macaque).